Reading from the N-terminus, the 79-residue chain is MKKAYPVINRVECKACERCIIACPRKVLYMSNKINERGYHYVEYRGEGCNGCGNCYYTCPEINAIEVHIERCEDGDTDG.

4Fe-4S ferredoxin-type domains are found at residues 4–33 and 40–70; these read AYPV…MSNK and HYVE…VHIE. Positions 13, 16, 19, 23, 49, 52, 55, and 59 each coordinate [4Fe-4S] cluster.

Heterotrimer of the VorA, VorB and VorC subunits. The cofactor is [4Fe-4S] cluster.

It catalyses the reaction 3-methyl-2-oxobutanoate + 2 oxidized [2Fe-2S]-[ferredoxin] + CoA = 2-methylpropanoyl-CoA + 2 reduced [2Fe-2S]-[ferredoxin] + CO2 + H(+). This Methanothermobacter marburgensis (strain ATCC BAA-927 / DSM 2133 / JCM 14651 / NBRC 100331 / OCM 82 / Marburg) (Methanobacterium thermoautotrophicum) protein is Ketoisovalerate oxidoreductase subunit VorC (vorC).